The following is a 359-amino-acid chain: Type II restriction enzyme HgiDI (359 aa).

The enzyme catalyses Endonucleolytic cleavage of DNA to give specific double-stranded fragments with terminal 5'-phosphates.. Functionally, a P subtype restriction enzyme that recognizes the double-stranded sequence 5'-GRCGYC-3' and cleaves after R-2. The sequence is that of Type II restriction enzyme HgiDI from Herpetosiphon aurantiacus (Herpetosiphon giganteus).